A 30-amino-acid polypeptide reads, in one-letter code: Rothein 3.3 (30 aa).

L30 carries the post-translational modification Leucine amide.

As to expression, expressed by the skin dorsal glands.

The protein resides in the secreted. In terms of biological role, lacks antimicrobial activity. Does not inhibit the formation of NO by neuronal nitric oxide. The protein is Rothein 3.3 of Litoria rothii (Roth's tree frog).